A 674-amino-acid chain; its full sequence is Methionine--tRNA ligase (674 aa).

The 'HIGH' region motif lies at 11–21 (PYANGDLHLGH). Residues cysteine 142, cysteine 145, cysteine 155, and cysteine 158 each coordinate Zn(2+). The 'KMSKS' region signature appears at 330–334 (KMSKS). Lysine 333 is an ATP binding site. The region spanning 574 to 674 (DFMKVDLRIA…EGAQPGMRVK (101 aa)) is the tRNA-binding domain.

This sequence belongs to the class-I aminoacyl-tRNA synthetase family. MetG type 1 subfamily. In terms of assembly, homodimer. Zn(2+) is required as a cofactor.

Its subcellular location is the cytoplasm. It catalyses the reaction tRNA(Met) + L-methionine + ATP = L-methionyl-tRNA(Met) + AMP + diphosphate. Is required not only for elongation of protein synthesis but also for the initiation of all mRNA translation through initiator tRNA(fMet) aminoacylation. The sequence is that of Methionine--tRNA ligase from Francisella tularensis subsp. holarctica (strain OSU18).